We begin with the raw amino-acid sequence, 218 residues long: Non-structural protein NS3 (218 aa).

The protein belongs to the orbivirus NS3 family.

May play a role in the release of virions from infected cells. This Camelus dromedarius (Dromedary) protein is Non-structural protein NS3 (Segment-10).